We begin with the raw amino-acid sequence, 230 residues long: MILTMKLVHPLHHSLSSSIPFPSRKRQSKPYRCSLPSPGCEKVIRTETVLPPAPVSCEGRRVLLGCLLATASGILSTGSAEAVSTSRRALRASKLPESDFTTLPNGLKYYDIKVGNGAEAVKGSRVAVHYVAKWKGITFMTSRQGLGVGGGTPYGFDVGQSERGNVLKGLDLGVEGMRVGGQRLVIVPPELAYGKKGVQEIPPNATIELDIELLSIKQSPFGTPVKIVEG.

Residues 1–56 (MILTMKLVHPLHHSLSSSIPFPSRKRQSKPYRCSLPSPGCEKVIRTETVLPPAPVS) constitute a chloroplast transit peptide. A PPIase FKBP-type domain is found at 123 to 217 (GSRVAVHYVA…ELDIELLSIK (95 aa)).

Belongs to the FKBP-type PPIase family.

It localises to the plastid. Its subcellular location is the chloroplast thylakoid lumen. The catalysed reaction is [protein]-peptidylproline (omega=180) = [protein]-peptidylproline (omega=0). In terms of biological role, PPIases accelerate the folding of proteins. It catalyzes the cis-trans isomerization of proline imidic peptide bonds in oligopeptides. The chain is Peptidyl-prolyl cis-trans isomerase FKBP16-4, chloroplastic (FKBP16-4) from Arabidopsis thaliana (Mouse-ear cress).